Reading from the N-terminus, the 131-residue chain is Glycine cleavage system H protein (131 aa).

In terms of domain architecture, Lipoyl-binding spans 24 to 106; the sequence is RVTVGISDHA…YGEGWIFVVE (83 aa). An N6-lipoyllysine modification is found at K65.

The protein belongs to the GcvH family. The glycine cleavage system is composed of four proteins: P, T, L and H. Requires (R)-lipoate as cofactor.

The glycine cleavage system catalyzes the degradation of glycine. The H protein shuttles the methylamine group of glycine from the P protein to the T protein. The polypeptide is Glycine cleavage system H protein (Xanthomonas campestris pv. campestris (strain 8004)).